The sequence spans 219 residues: Protein-L-isoaspartate O-methyltransferase (219 aa).

Serine 60 is a catalytic residue.

Belongs to the methyltransferase superfamily. L-isoaspartyl/D-aspartyl protein methyltransferase family.

Its subcellular location is the cytoplasm. The catalysed reaction is [protein]-L-isoaspartate + S-adenosyl-L-methionine = [protein]-L-isoaspartate alpha-methyl ester + S-adenosyl-L-homocysteine. In terms of biological role, catalyzes the methyl esterification of L-isoaspartyl residues in peptides and proteins that result from spontaneous decomposition of normal L-aspartyl and L-asparaginyl residues. It plays a role in the repair and/or degradation of damaged proteins. This Rhodospirillum rubrum (strain ATCC 11170 / ATH 1.1.1 / DSM 467 / LMG 4362 / NCIMB 8255 / S1) protein is Protein-L-isoaspartate O-methyltransferase.